The sequence spans 775 residues: Protein STRUBBELIG-RECEPTOR FAMILY 1 (775 aa).

An N-terminal signal peptide occupies residues 1-31 (MRSMRSGRDNNICFLGFLSFALISLPSLSLA). Residues 32 to 314 (LTNPDDVAAI…GKEDSFTSKR (283 aa)) lie on the Extracellular side of the membrane. LRR repeat units follow at residues 101 to 122 (SLKA…TLPV), 123 to 146 (SLQN…SSLK), 147 to 169 (SLSV…FQDL), 171 to 193 (LMIN…MQNL), 195 to 217 (TLTS…QDLP), and 218 to 238 (LKDL…KLLS). Residue Asn133 is glycosylated (N-linked (GlcNAc...) asparagine). Residues Asn181 and Asn192 are each glycosylated (N-linked (GlcNAc...) asparagine). Asn250 carries N-linked (GlcNAc...) asparagine glycosylation. Residues 254–308 (APSPSPETPPSPTSPKRPFFGPPSPNASAGHGQAHVRSPPSDHHPSRPTPQGKED) form a disordered region. Over residues 256 to 278 (SPSPETPPSPTSPKRPFFGPPSP) the composition is skewed to pro residues. Asn279 is a glycosylation site (N-linked (GlcNAc...) asparagine). The chain crosses the membrane as a helical span at residues 315–335 (IIWISILGAFSFVVLALVCLL). Topologically, residues 336–775 (CGRKCLRKRE…NGDNQYTGRR (440 aa)) are cytoplasmic. The disordered stretch occupies residues 345-414 (EDSEQLSKPH…VGSESKQESH (70 aa)). The span at 367 to 379 (RSNASMLPPSNTF) shows a compositional bias: polar residues. Residues 380-391 (NKDKEARPKERV) show a composition bias toward basic and acidic residues. The Protein kinase domain occupies 478-756 (FSHENLIGTG…EVVQDLSDMI (279 aa)).

Belongs to the protein kinase superfamily. Ser/Thr protein kinase family. Expressed in roots, stems, leaves and flowers. Low expression in seedlings and siliques.

It localises to the membrane. Functionally, not essential for epidermal patterning and not redundant with STRUBBELIG. The protein is Protein STRUBBELIG-RECEPTOR FAMILY 1 (SRF1) of Arabidopsis thaliana (Mouse-ear cress).